The following is a 256-amino-acid chain: Coiled-coil domain-containing protein 90B, mitochondrial (256 aa).

Residues 1-42 constitute a mitochondrion transit peptide; it reads MRSRWIWRFLRPDGGGIRWTSTPHGRLSPALRRGFLTTTTKS. Residues 129 to 167 are a coiled coil; sequence LEKSEFANLRAENEKMKIELDQVKQQLTNETSRIRADNK. The helical transmembrane segment at 231 to 253 threads the bilayer; it reads TIRYLAASVFTCLAIALGFYRFW.

Belongs to the CCDC90 family. As to quaternary structure, interacts with MCU.

The protein resides in the mitochondrion membrane. This is Coiled-coil domain-containing protein 90B, mitochondrial (Ccdc90b) from Mus musculus (Mouse).